Here is a 181-residue protein sequence, read N- to C-terminus: Adenine phosphoribosyltransferase (181 aa).

Belongs to the purine/pyrimidine phosphoribosyltransferase family. In terms of assembly, homodimer.

It is found in the cytoplasm. The enzyme catalyses AMP + diphosphate = 5-phospho-alpha-D-ribose 1-diphosphate + adenine. It participates in purine metabolism; AMP biosynthesis via salvage pathway; AMP from adenine: step 1/1. Catalyzes a salvage reaction resulting in the formation of AMP, that is energically less costly than de novo synthesis. This is Adenine phosphoribosyltransferase from Rhizobium leguminosarum bv. trifolii (strain WSM2304).